Reading from the N-terminus, the 35-residue chain is Photosystem II reaction center protein T (35 aa).

Residues 3 to 23 form a helical membrane-spanning segment; that stretch reads ALVYTFLLVSTLGIIFFAIFF.

It belongs to the PsbT family. In terms of assembly, PSII is composed of 1 copy each of membrane proteins PsbA, PsbB, PsbC, PsbD, PsbE, PsbF, PsbH, PsbI, PsbJ, PsbK, PsbL, PsbM, PsbT, PsbY, PsbZ, Psb30/Ycf12, at least 3 peripheral proteins of the oxygen-evolving complex and a large number of cofactors. It forms dimeric complexes.

The protein resides in the plastid. Its subcellular location is the chloroplast thylakoid membrane. Its function is as follows. Found at the monomer-monomer interface of the photosystem II (PS II) dimer, plays a role in assembly and dimerization of PSII. PSII is a light-driven water plastoquinone oxidoreductase, using light energy to abstract electrons from H(2)O, generating a proton gradient subsequently used for ATP formation. The chain is Photosystem II reaction center protein T from Nelumbo lutea (American lotus).